Here is a 350-residue protein sequence, read N- to C-terminus: MNSLYSVVNTLRDRYAPVSHTSTFRQTGEITPEEFVAAGDYLVFKFPTWSWGDADSESRRASHLPPGKQFLVTRNVPCNRRLNENFAGDAGLEEAVVDDGDEFKGSKGDDDGWLRTGGLSSSQPLKAREVRTVDDAGNAGERAQPDDDDDIPDMEDEEDDEAIIRDTDASGQTSSRRTYTLYIMYSPYYRTPRLYLSGYGANGQPLPPHNMMEDIMGDYKDKTVTLEDFPFFANNIKMASVHPCKHAPVMKTLLDRADAALKLRREKLKTGDASGQQAGLEGLADEFNKLGVSGKGDASKIDKNDEWEDIQHDDVADQEVAIRVDQYLVVFLKFIASVTPGIEHDFTMGV.

The segment at 85-166 (NFAGDAGLEE…EEDDEAIIRD (82 aa)) is flexible region. Positions 97–171 (VDDGDEFKGS…AIIRDTDASG (75 aa)) are disordered. Over residues 102–113 (EFKGSKGDDDGW) the composition is skewed to basic and acidic residues. Residues 146-161 (DDDDDIPDMEDEEDDE) show a composition bias toward acidic residues. The active-site Glycyl thioester intermediate is Cys-244. The segment at 248-326 (PVMKTLLDRA…DQEVAIRVDQ (79 aa)) is handle region. Residues Lys-262 and Lys-267 each carry the N6-acetyllysine modification.

This sequence belongs to the ATG3 family. As to quaternary structure, monomer. Interacts with ATG8 through an intermediate thioester bond through the C-terminal Gly of ATG8. Also interacts with the 40 amino acid C-terminal region of the E1-like ATG7 enzyme. Also interacts with the ATG12-ATG5 conjugate. Interacts with HAT1. Post-translationally, acetylated by HAT1 at Lys-262 and Lys-267, which affects the interaction with ATG8 and prevents autophagy during both appressorium development and nutrient starvation.

Its subcellular location is the preautophagosomal structure. The protein resides in the cytoplasm. E2 conjugating enzyme required for the cytoplasm to vacuole transport (Cvt) and autophagy. Required for selective autophagic degradation of the nucleus (nucleophagy) as well as for mitophagy which contributes to regulate mitochondrial quantity and quality by eliminating the mitochondria to a basal level to fulfill cellular energy requirements and preventing excess ROS production. Responsible for the E2-like covalent binding of phosphatidylethanolamine to the C-terminal Gly of ATG8. The ATG12-ATG5 conjugate plays a role of an E3 and promotes the transfer of ATG8 from ATG3 to phosphatidylethanolamine (PE). This step is required for the membrane association of ATG8. The formation of the ATG8-phosphatidylethanolamine conjugate is essential for autophagy and for the cytoplasm to vacuole transport (Cvt). The ATG8-PE conjugate mediates tethering between adjacent membranes and stimulates membrane hemifusion, leading to expansion of the autophagosomal membrane during autophagy. Plays a role in appressorium formation and pathogenicity. This Pyricularia oryzae (strain 70-15 / ATCC MYA-4617 / FGSC 8958) (Rice blast fungus) protein is Autophagy-related protein 3.